Here is a 535-residue protein sequence, read N- to C-terminus: uncharacterized protein (535 aa).

WD repeat units follow at residues 189-226, 228-267, 269-314, 320-359, 362-404, and 462-505; these read RDDF…TRVL, ESIY…PRIS, HHPG…AVLV, AHDE…QPLY, QQNA…KIDE, and VHSV…SWHN.

Belongs to the WD repeat CDC20/Fizzy family.

This is an uncharacterized protein from Schizosaccharomyces pombe (strain 972 / ATCC 24843) (Fission yeast).